A 153-amino-acid chain; its full sequence is Deoxyuridine 5'-triphosphate nucleotidohydrolase (153 aa).

Residues 71 to 73, N84, 88 to 90, and K98 each bind substrate; these read RSG and TID.

Belongs to the dUTPase family. Mg(2+) serves as cofactor.

The catalysed reaction is dUTP + H2O = dUMP + diphosphate + H(+). It participates in pyrimidine metabolism; dUMP biosynthesis; dUMP from dCTP (dUTP route): step 2/2. Functionally, this enzyme is involved in nucleotide metabolism: it produces dUMP, the immediate precursor of thymidine nucleotides and it decreases the intracellular concentration of dUTP so that uracil cannot be incorporated into DNA. The sequence is that of Deoxyuridine 5'-triphosphate nucleotidohydrolase from Wolbachia sp. subsp. Drosophila simulans (strain wRi).